The chain runs to 470 residues: 3-isopropylmalate dehydratase large subunit (470 aa).

Positions 349, 409, and 412 each coordinate [4Fe-4S] cluster.

The protein belongs to the aconitase/IPM isomerase family. LeuC type 1 subfamily. As to quaternary structure, heterodimer of LeuC and LeuD. It depends on [4Fe-4S] cluster as a cofactor.

The catalysed reaction is (2R,3S)-3-isopropylmalate = (2S)-2-isopropylmalate. It participates in amino-acid biosynthesis; L-leucine biosynthesis; L-leucine from 3-methyl-2-oxobutanoate: step 2/4. Catalyzes the isomerization between 2-isopropylmalate and 3-isopropylmalate, via the formation of 2-isopropylmaleate. This Koribacter versatilis (strain Ellin345) protein is 3-isopropylmalate dehydratase large subunit.